Here is a 253-residue protein sequence, read N- to C-terminus: Probable transcriptional regulatory protein syc0529_d (253 aa).

This sequence belongs to the TACO1 family.

The protein resides in the cytoplasm. This Synechococcus sp. (strain ATCC 27144 / PCC 6301 / SAUG 1402/1) (Anacystis nidulans) protein is Probable transcriptional regulatory protein syc0529_d.